The sequence spans 105 residues: MANRIKKGDQVVINTGKDKGKQGEVVRVDGDRVIVSNANVIKRHTKPNPQAGVAGGVVEREASIHISNVNIVNPATGKGERVGFKVLEDGRKLRVFRSSGEALDA.

This sequence belongs to the universal ribosomal protein uL24 family. In terms of assembly, part of the 50S ribosomal subunit.

Its function is as follows. One of two assembly initiator proteins, it binds directly to the 5'-end of the 23S rRNA, where it nucleates assembly of the 50S subunit. In terms of biological role, one of the proteins that surrounds the polypeptide exit tunnel on the outside of the subunit. This is Large ribosomal subunit protein uL24 from Xanthomonas axonopodis pv. citri (strain 306).